A 91-amino-acid chain; its full sequence is Cytochrome b-c1 complex subunit 10, mitochondrial (91 aa).

Over methionine 1–lysine 34 the chain is Mitochondrial matrix. Residues glutamine 35–alanine 58 traverse the membrane as a helical segment. Residues serine 59–phenylalanine 91 lie on the Mitochondrial intermembrane side of the membrane.

It belongs to the UQCR11/QCR10 family. In terms of assembly, component of the ubiquinol-cytochrome c oxidoreductase (cytochrome b-c1 complex, complex III, CIII), a multisubunit enzyme composed of 10 subunits. The complex is composed of 3 respiratory subunits cytochrome b (cob), cytochrome c1 (cyt-1) and Rieske protein (fes-1), 2 core protein subunits pep and ucr-1, and 5 low-molecular weight protein subunits qcr6, qcr7, qcr8, qcr9 and probably NCU16844/qcr10. The complex exists as an obligatory dimer and forms supercomplexes (SCs) in the inner mitochondrial membrane with NADH-ubiquinone oxidoreductase (complex I, CI) and cytochrome c oxidase (complex IV, CIV), resulting in different assemblies (supercomplexes SCI(1)III(2), SCIII(2)IV(1) and SCIII(2)IV(2) as well as higher order I(x)III(y)IV(z) megacomplexes).

The protein localises to the mitochondrion inner membrane. Functionally, component of the ubiquinol-cytochrome c oxidoreductase, a multisubunit transmembrane complex that is part of the mitochondrial electron transport chain which drives oxidative phosphorylation. The respiratory chain contains 3 multisubunit complexes succinate dehydrogenase (complex II, CII), ubiquinol-cytochrome c oxidoreductase (cytochrome b-c1 complex, complex III, CIII) and cytochrome c oxidase (complex IV, CIV), that cooperate to transfer electrons derived from NADH and succinate to molecular oxygen, creating an electrochemical gradient over the inner membrane that drives transmembrane transport and the ATP synthase. The cytochrome b-c1 complex catalyzes electron transfer from ubiquinol to cytochrome c, linking this redox reaction to translocation of protons across the mitochondrial inner membrane, with protons being carried across the membrane as hydrogens on the quinol. In the process called Q cycle, 2 protons are consumed from the matrix, 4 protons are released into the intermembrane space and 2 electrons are passed to cytochrome c. This is Cytochrome b-c1 complex subunit 10, mitochondrial from Neurospora crassa (strain ATCC 24698 / 74-OR23-1A / CBS 708.71 / DSM 1257 / FGSC 987).